Consider the following 258-residue polypeptide: MIEFKDVGLVYPNGTEGLKNINVKINDGEFVVIVGLSGAGKSTFIRSINRLVTPTTGELIIDDENILNYSGNKLRMLRTKTGMIFQNYNLVKRSNVFKNVLAGRLGHTGTIRSIFNQYKKEDVALAYESLHRVNIAEKIYNRADELSGGQQQRVSIARVLTQQPKYILADEPVASLDPPTSHQVMTYLKKINREDKITTIVNLHFIDMAMEYADRIIGMRAGEVVFDGPVSEVSESTFEEIYGRSIREDDLRGGAKES.

The ABC transporter domain maps to 2–246; the sequence is IEFKDVGLVY…TFEEIYGRSI (245 aa). 35-42 provides a ligand contact to ATP; that stretch reads GLSGAGKS.

The protein belongs to the ABC transporter superfamily. Phosphonates importer (TC 3.A.1.9.1) family. As to quaternary structure, the complex is composed of two ATP-binding proteins (PhnC), two transmembrane proteins (PhnE) and a solute-binding protein (PhnD).

The protein resides in the cell membrane. It carries out the reaction phosphonate(out) + ATP + H2O = phosphonate(in) + ADP + phosphate + H(+). Functionally, part of the ABC transporter complex PhnCDE involved in phosphonates import. Responsible for energy coupling to the transport system. In Oceanobacillus iheyensis (strain DSM 14371 / CIP 107618 / JCM 11309 / KCTC 3954 / HTE831), this protein is Phosphonates import ATP-binding protein PhnC 1.